A 481-amino-acid polypeptide reads, in one-letter code: Aspartyl/glutamyl-tRNA(Asn/Gln) amidotransferase subunit B (481 aa).

This sequence belongs to the GatB/GatE family. GatB subfamily. As to quaternary structure, heterotrimer of A, B and C subunits.

It catalyses the reaction L-glutamyl-tRNA(Gln) + L-glutamine + ATP + H2O = L-glutaminyl-tRNA(Gln) + L-glutamate + ADP + phosphate + H(+). The enzyme catalyses L-aspartyl-tRNA(Asn) + L-glutamine + ATP + H2O = L-asparaginyl-tRNA(Asn) + L-glutamate + ADP + phosphate + 2 H(+). Allows the formation of correctly charged Asn-tRNA(Asn) or Gln-tRNA(Gln) through the transamidation of misacylated Asp-tRNA(Asn) or Glu-tRNA(Gln) in organisms which lack either or both of asparaginyl-tRNA or glutaminyl-tRNA synthetases. The reaction takes place in the presence of glutamine and ATP through an activated phospho-Asp-tRNA(Asn) or phospho-Glu-tRNA(Gln). The chain is Aspartyl/glutamyl-tRNA(Asn/Gln) amidotransferase subunit B from Pseudomonas fluorescens (strain ATCC BAA-477 / NRRL B-23932 / Pf-5).